We begin with the raw amino-acid sequence, 205 residues long: MARSKSSNNWLQEHVNDQYVHMAQKDGYRARAAYKLLEINDKDKLIRPGTVLADLGSTPGSWSQVAARIVGEKGKVFALDILDMDPVPGVDFIQGDFREEAVLREFEQLLDGRALDLVISDMAPNMSGMSAIDQARSFLLCELALEFARDHLKPGGHFLVKVFQGSDFQPYLKAMRELFDEVVTRKPKASRDRSSEIYLLGKGRR.

S-adenosyl-L-methionine-binding residues include Gly60, Trp62, Asp80, Asp96, and Asp121. The Proton acceptor role is filled by Lys161.

Belongs to the class I-like SAM-binding methyltransferase superfamily. RNA methyltransferase RlmE family.

It localises to the cytoplasm. The catalysed reaction is uridine(2552) in 23S rRNA + S-adenosyl-L-methionine = 2'-O-methyluridine(2552) in 23S rRNA + S-adenosyl-L-homocysteine + H(+). Its function is as follows. Specifically methylates the uridine in position 2552 of 23S rRNA at the 2'-O position of the ribose in the fully assembled 50S ribosomal subunit. This is Ribosomal RNA large subunit methyltransferase E from Chromobacterium violaceum (strain ATCC 12472 / DSM 30191 / JCM 1249 / CCUG 213 / NBRC 12614 / NCIMB 9131 / NCTC 9757 / MK).